The chain runs to 257 residues: Snake venom serine protease KN3 (257 aa).

The N-terminal stretch at 1–18 (MVLIRVLANLLILQLSYA) is a signal peptide. Positions 19 to 24 (QKSSKL) are excised as a propeptide. The 224-residue stretch at 25-248 (VVGGDECNIN…HLDWIKSIIA (224 aa)) folds into the Peptidase S1 domain. 6 disulfides stabilise this stretch: Cys-31–Cys-162, Cys-49–Cys-65, Cys-97–Cys-255, Cys-141–Cys-209, Cys-173–Cys-188, and Cys-199–Cys-224. Residues His-64 and Asp-109 each act as charge relay system in the active site. 3 N-linked (GlcNAc...) asparagine glycosylation sites follow: Asn-120, Asn-121, and Asn-164. Ser-203 acts as the Charge relay system in catalysis.

The protein belongs to the peptidase S1 family. Snake venom subfamily. As to quaternary structure, monomer. As to expression, expressed by the venom gland.

The protein localises to the secreted. Its function is as follows. Snake venom serine protease that may act in the hemostasis system of the prey. The chain is Snake venom serine protease KN3 from Trimeresurus stejnegeri (Chinese green tree viper).